We begin with the raw amino-acid sequence, 315 residues long: tRNA U34 carboxymethyltransferase (315 aa).

Carboxy-S-adenosyl-L-methionine-binding positions include lysine 79, tryptophan 93, lysine 98, glycine 117, 142 to 144 (DPS), 169 to 170 (VE), tyrosine 193, and arginine 307.

The protein belongs to the class I-like SAM-binding methyltransferase superfamily. CmoB family. As to quaternary structure, homotetramer.

The catalysed reaction is carboxy-S-adenosyl-L-methionine + 5-hydroxyuridine(34) in tRNA = 5-carboxymethoxyuridine(34) in tRNA + S-adenosyl-L-homocysteine + H(+). In terms of biological role, catalyzes carboxymethyl transfer from carboxy-S-adenosyl-L-methionine (Cx-SAM) to 5-hydroxyuridine (ho5U) to form 5-carboxymethoxyuridine (cmo5U) at position 34 in tRNAs. The sequence is that of tRNA U34 carboxymethyltransferase from Helicobacter hepaticus (strain ATCC 51449 / 3B1).